Here is a 164-residue protein sequence, read N- to C-terminus: Urease subunit beta (164 aa).

2 stretches are compositionally biased toward polar residues: residues 1 to 10 (MSTKTNSTKA) and 20 to 30 (TNRGTKSSAGY). Residues 1-30 (MSTKTNSTKATSEKTDSLKTNRGTKSSAGY) form a disordered region.

Belongs to the urease beta subunit family. In terms of assembly, heterotrimer of UreA (gamma), UreB (beta) and UreC (alpha) subunits. Three heterotrimers associate to form the active enzyme.

The protein resides in the cytoplasm. It carries out the reaction urea + 2 H2O + H(+) = hydrogencarbonate + 2 NH4(+). The protein operates within nitrogen metabolism; urea degradation; CO(2) and NH(3) from urea (urease route): step 1/1. Its function is as follows. Expression of the urease operon increases the likelihood of bacterial survival by contributing to acid resistance in vitro and in vivo in BALB/c mice. Y.enterocolitica enters the body via an oral path and must survive the acidic stomach before being able to colonize the intestinal mucosa. In Yersinia enterocolitica, this protein is Urease subunit beta.